Reading from the N-terminus, the 215-residue chain is Cytochrome b6 (215 aa).

A helical membrane pass occupies residues 32-52 (IFYCLGGITLTCFLVQVATGF). Residue C35 coordinates heme c. The heme b site is built by H86 and H100. Helical transmembrane passes span 90–110 (ASMMVLMMILHVFRVYLTGGF), 116–136 (LTWVTGVILAVLTVSFGVTGY), and 186–206 (LHTFVLPLLTAVFMLMHFLMI). Positions 187 and 202 each coordinate heme b.

This sequence belongs to the cytochrome b family. PetB subfamily. The 4 large subunits of the cytochrome b6-f complex are cytochrome b6, subunit IV (17 kDa polypeptide, PetD), cytochrome f and the Rieske protein, while the 4 small subunits are PetG, PetL, PetM and PetN. The complex functions as a dimer. Heme b serves as cofactor. The cofactor is heme c.

Its subcellular location is the plastid. The protein localises to the chloroplast thylakoid membrane. Functionally, component of the cytochrome b6-f complex, which mediates electron transfer between photosystem II (PSII) and photosystem I (PSI), cyclic electron flow around PSI, and state transitions. This chain is Cytochrome b6, found in Klebsormidium bilatum (Filamentous green alga).